A 248-amino-acid chain; its full sequence is Mannose-binding protein C (248 aa).

The first 20 residues, 1–20 (MSLFPSLPLLLLSMVAASYS), serve as a signal peptide directing secretion. A Collagen-like domain is found at 42–99 (GINGFPGKDGRDGTKGEKGEPGQGLRGLQGPPGKLGPPGNPGPSGSPGPKGQKGDPGK). The interval 43-113 (INGFPGKDGR…DSSLAASERK (71 aa)) is disordered. Residue proline 47 is modified to 4-hydroxyproline. Positions 49–61 (KDGRDGTKGEKGE) are enriched in basic and acidic residues. 4-hydroxyproline is present on residues proline 73, proline 79, proline 82, and proline 88. A compositionally biased stretch (pro residues) spans 75-87 (KLGPPGNPGPSGS). The segment covering 93-102 (QKGDPGKSPD) has biased composition (basic and acidic residues). Residues 112 to 130 (RKALQTEMARIKKWLTFSL) are a coiled coil. Positions 134-245 (VGNKFFLTNG…CSTSHLAVCE (112 aa)) constitute a C-type lectin domain. 2 disulfides stabilise this stretch: cysteine 155-cysteine 244 and cysteine 222-cysteine 236.

As to quaternary structure, oligomeric complex of 3 or more homotrimers. Interacts with MASP1 and MASP2. Interacts with MEP1A and MEP1B and may inhibit their catalytic activity. Hydroxylation on proline residues within the sequence motif, GXPG, is most likely to be 4-hydroxy as this fits the requirement for 4-hydroxylation in vertebrates.

The protein resides in the secreted. In terms of biological role, calcium-dependent lectin involved in innate immune defense. Binds mannose, fucose and N-acetylglucosamine on different microorganisms and activates the lectin complement pathway. Binds to late apoptotic cells, as well as to apoptotic blebs and to necrotic cells, but not to early apoptotic cells, facilitating their uptake by macrophages. This Gorilla gorilla gorilla (Western lowland gorilla) protein is Mannose-binding protein C (MBL2).